We begin with the raw amino-acid sequence, 149 residues long: Large ribosomal subunit protein uL15 (149 aa).

The segment covering 1–12 (MSEPIKLHDLRP) has biased composition (basic and acidic residues). The tract at residues 1–55 (MSEPIKLHDLRPAKGANKPKTRVGRGEASKGKTAGRGTKGTKARKQVSAAFEGGQ) is disordered.

The protein belongs to the universal ribosomal protein uL15 family. As to quaternary structure, part of the 50S ribosomal subunit.

Functionally, binds to the 23S rRNA. This is Large ribosomal subunit protein uL15 from Corynebacterium kroppenstedtii (strain DSM 44385 / JCM 11950 / CIP 105744 / CCUG 35717).